An 88-amino-acid polypeptide reads, in one-letter code: Protein MATERNALLY EXPRESSED GENE 1 (88 aa).

A signal peptide spans 1 to 27 (MEYKKRVDALVFFSLLLLGYFAAHAHG). Residue Asn36 is glycosylated (N-linked (GlcNAc...) asparagine). 2 disulfide bridges follow: Cys65-Cys87 and Cys68-Cys76.

Belongs to the MEG family. Post-translationally, glycosylated. In terms of tissue distribution, expressed exclusively in endosperm. Found in basal endosperm transfer cells.

Its subcellular location is the secreted. The protein resides in the cell wall. The protein localises to the cell membrane. It localises to the extracellular space. It is found in the extracellular matrix. In terms of biological role, regulates maternal nutrient uptake, sucrose partitioning, and seed biomass yield. Necessary and sufficient for the establishment and differentiation of the endosperm nutrient transfer cells located at the mother:seed interface. Exclusive expression of the maternal allele at the early stages of endosperm development. The maternal allele is hypomethylated. At later stages, expression becomes biallelic. Regulated by the transcription factor MRP1. In Zea mays (Maize), this protein is Protein MATERNALLY EXPRESSED GENE 1 (MEG1).